The sequence spans 326 residues: WD repeat-containing protein slr1409 (326 aa).

6 WD repeats span residues 47 to 77 (GSDV…TLWT), 88 to 118 (GQKP…RLWN), 129 to 159 (PHRA…KIFT), 169 to 199 (LKSG…HLIN), 210 to 240 (TGQG…KLWN), and 252 to 282 (VPTG…RFWQ).

The sequence is that of WD repeat-containing protein slr1409 from Synechocystis sp. (strain ATCC 27184 / PCC 6803 / Kazusa).